A 362-amino-acid chain; its full sequence is Glutamate 5-kinase (362 aa).

K3 contributes to the ATP binding site. 3 residues coordinate substrate: S43, D128, and N140. ATP contacts are provided by residues 160–161 and 202–208; these read TD and TGGMRTK. Residues 267-348 form the PUA domain; sequence AGAILIDDGA…REIENVLGYS (82 aa).

It belongs to the glutamate 5-kinase family.

The protein localises to the cytoplasm. It catalyses the reaction L-glutamate + ATP = L-glutamyl 5-phosphate + ADP. It functions in the pathway amino-acid biosynthesis; L-proline biosynthesis; L-glutamate 5-semialdehyde from L-glutamate: step 1/2. Catalyzes the transfer of a phosphate group to glutamate to form L-glutamate 5-phosphate. This Xanthomonas euvesicatoria pv. vesicatoria (strain 85-10) (Xanthomonas campestris pv. vesicatoria) protein is Glutamate 5-kinase.